A 687-amino-acid polypeptide reads, in one-letter code: Carboxysome assembly protein CcmM (687 aa).

The tract at residues 242–327 (SINSDITNQI…RVVEVIIQRP (86 aa)) is rbcS-like repeat 1, SSUL1. Disordered stretches follow at residues 328 to 355 (GDVP…SAVA) and 442 to 476 (VHRP…SSAG). Residues 335 to 346 (SRGTTTTKALSS) show a composition bias toward polar residues. Residues 366–445 (ANQLRALLHQ…RVAEIVVHRP (80 aa)) form a rbcS-like repeat 2, SSUL2 region. Positions 451 to 472 (GKPSSSSSSVGYKSAPVSSAGG) are enriched in low complexity. The rbcS-like repeat 3, SSUL3 stretch occupies residues 480–562 (PEVIATVRGL…RVLEQIIQRP (83 aa)). Positions 565-590 (NVVAGRSPSSSSASTSSSASSNGFGS) are disordered. Positions 568–587 (AGRSPSSSSASTSSSASSNG) are enriched in low complexity. A rbcS-like repeat 4, SSUL4 region spans residues 599 to 687 (SAVRLDNSVV…RVLETIIQRP (89 aa)).

It belongs to the gamma-class carbonic anhydrase family. As to quaternary structure, probably forms homotrimers. Full length CcmM interacts with CcaA, CcmK1, CcmK2, CcmK4, CcmL, CcmN and itself, while the N-terminus of CcmM (first 249 residues) only interacts with CcaA, CcmM and CcmN. A probable CcmM-CcaA-CcmN complex as well as a CcaA-RuBisCO-CcmM complex can also be isolated. Interacts with full-length CcaA and the first 220 residues of CcaA; surface residues Gln-177 to Gln-188 are responsible in part for binding. Multiple forms of the protein of 73 (full length), 62, 52 (the most predominant form) and 36 kDa are seen even in the presence of protease inhibitors. CcmM52 interacts with CcaA.

It is found in the carboxysome. Functionally, functions as a scaffold protein for the assembly of beta-carboxysomes, initiates carboxysome assembly via its N-terminal domain binding to CcaA, CcmK and CcmL. Binds HCO(3)-, suggesting it may play a role in the activity or regulation of bicarbonate dehydration. Also initiates carboxysome assembly by coalescing RuBisCO (ribulose bisphosphate carboxylase, rbcL-rbcS) via its SSU-like domains. Produced as a full-length and a shorter form; both forms are required for correct carboxysome assembly and growth. Despite its strong similarity to gamma-class carbonic anhydrase (CA) it does not have detectable CA activity. Beta-carboxysome assembly initiates when soluble RuBisCO is condensed into a liquid matrix in a pre-carboxysome by the RbcS-like domains of probably both forms of CcmM. CcmN interacts with the N-terminus of full length CcmM, and then recruits the shell proteins (CcmK) via CcmN's encapsulation peptide. CcmM73 also interacts with CcmK proteins and CcmL directly. Shell formation requires CcmK proteins and CcmO. CcmL caps the otherwise elongated carboxysome. Once fully encapsulated carboxysomes are formed, they migrate within the cell probably via interactions with the cytoskeleton. The sequence is that of Carboxysome assembly protein CcmM from Synechocystis sp. (strain ATCC 27184 / PCC 6803 / Kazusa).